Reading from the N-terminus, the 439-residue chain is Mitochondrial distribution and morphology protein 12 (439 aa).

The 439-residue stretch at 1–439 folds into the SMP-LTD domain; the sequence is MSIDINWDTI…VYPSFWTFLV (439 aa). 2 disordered regions span residues 65–165 and 229–284; these read PLPD…PGAL and LTLT…HEKS. A compositionally biased stretch (acidic residues) spans 69–90; the sequence is FYEDDEDYPDEEGDEAENEAED. A compositionally biased stretch (basic and acidic residues) spans 109 to 121; it reads PSRDSQSRERGRG. Residues 229–243 are compositionally biased toward polar residues; that stretch reads LTLTPQSHPDPTSRP.

It belongs to the MDM12 family. Component of the ER-mitochondria encounter structure (ERMES) or MDM complex, composed of MMM1, MDM10, mdm12 and MDM34. An MMM1 homodimer associates with one molecule of mdm12 on each side in a pairwise head-to-tail manner, and the SMP-LTD domains of MMM1 and mdm12 generate a continuous hydrophobic tunnel for phospholipid trafficking.

It localises to the mitochondrion outer membrane. Its subcellular location is the endoplasmic reticulum membrane. Its function is as follows. Component of the ERMES/MDM complex, which serves as a molecular tether to connect the endoplasmic reticulum (ER) and mitochondria. Components of this complex are involved in the control of mitochondrial shape and protein biogenesis, and function in nonvesicular lipid trafficking between the ER and mitochondria. mdm12 is required for the interaction of the ER-resident membrane protein MMM1 and the outer mitochondrial membrane-resident beta-barrel protein MDM10. The mdm12-MMM1 subcomplex functions in the major beta-barrel assembly pathway that is responsible for biogenesis of all mitochondrial outer membrane beta-barrel proteins, and acts in a late step after the SAM complex. The MDM10-mdm12-MMM1 subcomplex further acts in the TOM40-specific pathway after the action of the mdm12-MMM1 complex. Essential for establishing and maintaining the structure of mitochondria and maintenance of mtDNA nucleoids. The polypeptide is Mitochondrial distribution and morphology protein 12 (Pyrenophora tritici-repentis (strain Pt-1C-BFP) (Wheat tan spot fungus)).